The following is a 428-amino-acid chain: Glutamate-1-semialdehyde 2,1-aminomutase (428 aa).

Residue lysine 267 is modified to N6-(pyridoxal phosphate)lysine.

Belongs to the class-III pyridoxal-phosphate-dependent aminotransferase family. HemL subfamily. In terms of assembly, homodimer. The cofactor is pyridoxal 5'-phosphate.

The protein localises to the cytoplasm. It catalyses the reaction (S)-4-amino-5-oxopentanoate = 5-aminolevulinate. It participates in porphyrin-containing compound metabolism; protoporphyrin-IX biosynthesis; 5-aminolevulinate from L-glutamyl-tRNA(Glu): step 2/2. This Desulforapulum autotrophicum (strain ATCC 43914 / DSM 3382 / VKM B-1955 / HRM2) (Desulfobacterium autotrophicum) protein is Glutamate-1-semialdehyde 2,1-aminomutase.